We begin with the raw amino-acid sequence, 340 residues long: UDP-N-acetylglucosamine--N-acetylmuramyl-(pentapeptide) pyrophosphoryl-undecaprenol N-acetylglucosamine transferase (340 aa).

UDP-N-acetyl-alpha-D-glucosamine-binding positions include T10–G12, N110, S171, and Q272.

The protein belongs to the glycosyltransferase 28 family. MurG subfamily.

The protein localises to the cell membrane. It catalyses the reaction di-trans,octa-cis-undecaprenyl diphospho-N-acetyl-alpha-D-muramoyl-L-alanyl-D-glutamyl-meso-2,6-diaminopimeloyl-D-alanyl-D-alanine + UDP-N-acetyl-alpha-D-glucosamine = di-trans,octa-cis-undecaprenyl diphospho-[N-acetyl-alpha-D-glucosaminyl-(1-&gt;4)]-N-acetyl-alpha-D-muramoyl-L-alanyl-D-glutamyl-meso-2,6-diaminopimeloyl-D-alanyl-D-alanine + UDP + H(+). It functions in the pathway cell wall biogenesis; peptidoglycan biosynthesis. Cell wall formation. Catalyzes the transfer of a GlcNAc subunit on undecaprenyl-pyrophosphoryl-MurNAc-pentapeptide (lipid intermediate I) to form undecaprenyl-pyrophosphoryl-MurNAc-(pentapeptide)GlcNAc (lipid intermediate II). The polypeptide is UDP-N-acetylglucosamine--N-acetylmuramyl-(pentapeptide) pyrophosphoryl-undecaprenol N-acetylglucosamine transferase (Wolbachia pipientis subsp. Culex pipiens (strain wPip)).